We begin with the raw amino-acid sequence, 144 residues long: NADH-ubiquinone oxidoreductase chain 6 (144 aa).

Helical transmembrane passes span 1 to 21 (MVKV…INID), 25 to 45 (SSFF…MSMH), 46 to 66 (IWFS…ILVY), 79 to 99 (YMAV…VLTY), and 108 to 128 (FYYS…LFFM).

This sequence belongs to the complex I subunit 6 family.

It localises to the mitochondrion membrane. It carries out the reaction a ubiquinone + NADH + 5 H(+)(in) = a ubiquinol + NAD(+) + 4 H(+)(out). Functionally, core subunit of the mitochondrial membrane respiratory chain NADH dehydrogenase (Complex I) that is believed to belong to the minimal assembly required for catalysis. Complex I functions in the transfer of electrons from NADH to the respiratory chain. The immediate electron acceptor for the enzyme is believed to be ubiquinone. The chain is NADH-ubiquinone oxidoreductase chain 6 from Caenorhabditis elegans.